The sequence spans 103 residues: Small ribosomal subunit protein uS10 (103 aa).

This sequence belongs to the universal ribosomal protein uS10 family. In terms of assembly, part of the 30S ribosomal subunit.

Functionally, involved in the binding of tRNA to the ribosomes. The polypeptide is Small ribosomal subunit protein uS10 (Polynucleobacter necessarius subsp. necessarius (strain STIR1)).